The sequence spans 464 residues: Sushi repeat-containing protein SRPX (464 aa).

Residues 1-30 (MGSPAHRPALLLLLPPLLLLLLLRVPPSRS) form the signal peptide. Ser34 carries O-linked (Xyl...) (chondroitin sulfate) serine glycosylation. 5 cysteine pairs are disulfide-bonded: Cys57/Cys85, Cys69/Cys103, Cys89/Cys115, Cys120/Cys161, and Cys147/Cys174. 2 consecutive Sushi domains span residues 57 to 117 (CSPI…ICKQ) and 118 to 176 (KRCP…SCVD). An HYR domain is found at 177–259 (MEPPRIKCPS…TCKFRVKVRV (83 aa)). The Sushi 3 domain occupies 260-319 (KRCGKLNAPENGYMKCSSDGDNYGATCEFSCIGGYELQGSPARVCQSNLAWSGTEPTCAA). 2 disulfide bridges follow: Cys262–Cys304 and Cys290–Cys317.

Detected in fibroblasts (at protein level). Retina and heart; less in placenta, pancreas, lung, liver, skeletal muscle, kidney and brain.

Its subcellular location is the cell surface. May be involved in phagocytosis during disk shedding, cell adhesion to cells other than the pigment epithelium or signal transduction. This Homo sapiens (Human) protein is Sushi repeat-containing protein SRPX (SRPX).